The primary structure comprises 458 residues: MLLLLPEITLTLIALLGQCFALMIPNKNRIIYNIVILLCIISIFLTFKYSSYEGIWHSFATERNIGISKSIILLFTIVSLIIYRDYSILVGETLKFEFITLMLLSIVGIFVAISSRNFLLLFCGMELTALTSYALAGFKLNDIKSSEGALKYFILGSLVSCLSLFGISFIYGFGGSIQFDDILHQLNNDSEIKPGLIIGIVLFLSSIFFKLASSPLHFWIPDVYEGSPISSVTYFTAASKIGMVIVLLNISKLIIGNYYPINYNLIKIIAILSMLFGAFGAIRQTSLKRLMAYSTILNIGYVLIGVLLHNQEGYKAALLYILIYAVVSIGFFTCLIMLFGKDVDNASFKTIEGIAETHKTIAALISIVMFSMIGIPPLTGFFGKYYLFYQAINKKEFTLAYCGIFTSVVAAFYYLKVVKAMYFSKKIAIIKLPMQYGLLLINYLVLGFLLFGSFIILF.

The next 14 membrane-spanning stretches (helical) occupy residues 2-22 (LLLLPEITLTLIALLGQCFAL), 30-50 (IIYNIVILLCIISIFLTFKYS), 71-91 (IILLFTIVSLIIYRDYSILVG), 93-113 (TLKFEFITLMLLSIVGIFVAI), 118-138 (FLLLFCGMELTALTSYALAGF), 153-173 (FILGSLVSCLSLFGISFIYGF), 196-216 (LIIGIVLFLSSIFFKLASSPL), 235-255 (FTAASKIGMVIVLLNISKLII), 261-281 (INYNLIKIIAILSMLFGAFGA), 290-310 (LMAYSTILNIGYVLIGVLLHN), 319-339 (LYILIYAVVSIGFFTCLIMLF), 361-381 (IAALISIVMFSMIGIPPLTGF), 397-417 (FTLAYCGIFTSVVAAFYYLKV), and 438-458 (LLLINYLVLGFLLFGSFIILF).

This sequence belongs to the complex I subunit 2 family. As to quaternary structure, NDH-1 is composed of 14 different subunits. Subunits NuoA, H, J, K, L, M, N constitute the membrane sector of the complex.

The protein resides in the cell inner membrane. It catalyses the reaction a quinone + NADH + 5 H(+)(in) = a quinol + NAD(+) + 4 H(+)(out). Functionally, NDH-1 shuttles electrons from NADH, via FMN and iron-sulfur (Fe-S) centers, to quinones in the respiratory chain. The immediate electron acceptor for the enzyme in this species is believed to be ubiquinone. Couples the redox reaction to proton translocation (for every two electrons transferred, four hydrogen ions are translocated across the cytoplasmic membrane), and thus conserves the redox energy in a proton gradient. The sequence is that of NADH-quinone oxidoreductase subunit N from Rickettsia prowazekii (strain Madrid E).